Consider the following 389-residue polypeptide: Apicidin F cluster transcription factor apf2 (389 aa).

Polar residues-rich tracts occupy residues 1–13 and 75–84; these read MSPP…TITD and PDSATPKPSL. Disordered regions lie at residues 1-27, 65-84, and 219-239; these read MSPP…VAQR, PQSV…KPSL, and EVPN…TKQP. A basic DNA-binding region region spans residues 12-38; it reads TDANERRKAQNRVAQRNYRSRQKLRVE. ANK repeat units lie at residues 241–270, 274–303, 307–336, and 357–386; these read EFKT…NIDT, HGRT…DLLM, SGVT…QQDR, and QNMT…DVNI.

It belongs to the bZIP family. Highly divergent.

The protein resides in the nucleus. Transcription factor that regulates the expression of the gene cluster that mediates the biosynthesis of apicidin F. Binds to the eight-base-pair motif 5'-TGACGTGA-3' called the 'Api-box' that is found in all promoters of the apicidin F cluster except in the promoter region of apf2 itself. The polypeptide is Apicidin F cluster transcription factor apf2 (Gibberella fujikuroi (strain CBS 195.34 / IMI 58289 / NRRL A-6831) (Bakanae and foot rot disease fungus)).